We begin with the raw amino-acid sequence, 340 residues long: MQFVNFFPLLALVVISLAGKATVEAATGLNPPVKLVWHYYKLTNTCDDAETYIRYQVEKFYKNDSSIAPKLLRLLYSDCMVNGCDGSILLQGPNSERTAPQNRGLGGFVIIDKIKQVLESRCPGVVSCADILNLATRDAVHMAGAPSYPVFTGRRDGGTLNADAVDLPSPSISVDESLAYFKSKGLDVLDMTTLLGAHSMGKTHCSYVVDRLYNFKNTGKPDPTMNTTLVSQLRYLCPPRTQKGQTDPLVYLNPDSGSSNRFTSSYYSRVLSHNAVLRVDQELLNNDDSKEITQEFASGFEDFRKSFALAMSRMGSINVLTGTAGEIRRDCRVTNANDGA.

The first 25 residues, 1-25 (MQFVNFFPLLALVVISLAGKATVEA), serve as a signal peptide directing secretion. Intrachain disulfides connect Cys-46–Cys-122, Cys-79–Cys-84, Cys-128–Cys-331, and Cys-205–Cys-237. Asn-63 carries an N-linked (GlcNAc...) asparagine glycan. The active site involves Arg-73. Residues Asp-78, Val-81, Gly-83, Asp-85, and Ser-87 each coordinate Ca(2+). Position 168 (Pro-168) interacts with substrate. His-198 lines the heme b pocket. Ca(2+) is bound at residue Ser-199. A glycan (N-linked (GlcNAc...) asparagine) is linked at Asn-226. Residues Asp-255 and Ser-258 each contribute to the Ca(2+) site.

This sequence belongs to the peroxidase family. Classical plant (class III) peroxidase subfamily. The cofactor is heme b. Ca(2+) serves as cofactor.

Its subcellular location is the secreted. It catalyses the reaction 2 a phenolic donor + H2O2 = 2 a phenolic radical donor + 2 H2O. Functionally, removal of H(2)O(2), oxidation of toxic reductants, biosynthesis and degradation of lignin, suberization, auxin catabolism, response to environmental stresses such as wounding, pathogen attack and oxidative stress. The enzyme activity has to be proved. The sequence is that of Probable peroxidase 61 (PER61) from Arabidopsis thaliana (Mouse-ear cress).